The following is a 150-amino-acid chain: MQIILLEKIGGLGNLGDIVTVKNGYARNFLIPAGKAKRATEANMKEFEARRAELEAKQAEILADARARQEKLDGQTVTVAQKAGVDGRLFGSVTNADIAAAIVAAGIEAVKANVRLPNGPLKAVGEYEVEVALHTDAVAKITVAVIAAAE.

Belongs to the bacterial ribosomal protein bL9 family.

In terms of biological role, binds to the 23S rRNA. The chain is Large ribosomal subunit protein bL9 from Neisseria gonorrhoeae (strain ATCC 700825 / FA 1090).